Consider the following 119-residue polypeptide: Ribonuclease P protein component (119 aa).

This sequence belongs to the RnpA family. Consists of a catalytic RNA component (M1 or rnpB) and a protein subunit.

It carries out the reaction Endonucleolytic cleavage of RNA, removing 5'-extranucleotides from tRNA precursor.. RNaseP catalyzes the removal of the 5'-leader sequence from pre-tRNA to produce the mature 5'-terminus. It can also cleave other RNA substrates such as 4.5S RNA. The protein component plays an auxiliary but essential role in vivo by binding to the 5'-leader sequence and broadening the substrate specificity of the ribozyme. The polypeptide is Ribonuclease P protein component (Mycobacterium avium (strain 104)).